Here is a 326-residue protein sequence, read N- to C-terminus: Adenosine receptor A1 (326 aa).

At 1–10 (MPPYISAFQA) the chain is on the extracellular side. A helical membrane pass occupies residues 11–33 (AYIGIEVLIALVSVPGNVLVIWA). The Cytoplasmic portion of the chain corresponds to 34–46 (VKVNQALRDATFC). The chain crosses the membrane as a helical span at residues 47-69 (FIVSLAVADVAVGALVIPLAILI). At 70 to 80 (NIGPQTYFHTC) the chain is on the extracellular side. The cysteines at positions 80 and 169 are disulfide-linked. A helical transmembrane segment spans residues 81 to 102 (LMVACPVLILTQSSILALLAIA). Over 103–123 (VDRYLRVKIPLRYKTVVTQRR) the chain is Cytoplasmic. The chain crosses the membrane as a helical span at residues 124–146 (AAVAIAGCWILSLVVGLTPMFGW). Topologically, residues 147 to 176 (NNLSEVEQAWIANGSVGEPVIKCEFEKVIS) are extracellular. 2 N-linked (GlcNAc...) asparagine glycosylation sites follow: N148 and N159. Residues 177–201 (MEYMVYFNFFVWVLPPLLLMVLIYL) traverse the membrane as a helical segment. The Cytoplasmic segment spans residues 202-235 (EVFYLIRKQLNKKVSASSGDPQKYYGKELKIAKS). The chain crosses the membrane as a helical span at residues 236 to 259 (LALILFLFALSWLPLHILNCITLF). Residues 260-267 (CPTCQKPS) are Extracellular-facing. The chain crosses the membrane as a helical span at residues 268-292 (ILIYIAIFLTHGNSAMNPIVYAFRI). Residues 293 to 326 (HKFRVTFLKIWNDHFRCQPKPPIEEDIPEEKADD) are Cytoplasmic-facing. Residue C309 is the site of S-palmitoyl cysteine attachment.

This sequence belongs to the G-protein coupled receptor 1 family.

It is found in the cell membrane. In terms of biological role, receptor for adenosine. The activity of this receptor is mediated by G proteins which inhibit adenylyl cyclase. In Mus musculus (Mouse), this protein is Adenosine receptor A1 (Adora1).